The following is a 225-amino-acid chain: Octanoyltransferase (225 aa).

The region spanning 37–217 (SDTPDEFWVV…ELASLIGYQT (181 aa)) is the BPL/LPL catalytic domain. Substrate contacts are provided by residues 76–83 (RGGQVTYH), 148–150 (SLG), and 161–163 (GLA). C179 (acyl-thioester intermediate) is an active-site residue.

Belongs to the LipB family.

Its subcellular location is the cytoplasm. It catalyses the reaction octanoyl-[ACP] + L-lysyl-[protein] = N(6)-octanoyl-L-lysyl-[protein] + holo-[ACP] + H(+). Its pathway is protein modification; protein lipoylation via endogenous pathway; protein N(6)-(lipoyl)lysine from octanoyl-[acyl-carrier-protein]: step 1/2. Its function is as follows. Catalyzes the transfer of endogenously produced octanoic acid from octanoyl-acyl-carrier-protein onto the lipoyl domains of lipoate-dependent enzymes. Lipoyl-ACP can also act as a substrate although octanoyl-ACP is likely to be the physiological substrate. The protein is Octanoyltransferase of Aeromonas salmonicida (strain A449).